We begin with the raw amino-acid sequence, 351 residues long: Putative ABC transporter permease protein MJ0876 (351 aa).

9 consecutive transmembrane segments (helical) span residues 4 to 24 (VGIL…ALYL), 59 to 79 (LPPI…GLML), 99 to 119 (VLMV…FEIF), 124 to 144 (ILVA…IIAL), 152 to 172 (VIIV…YLIA), 196 to 216 (GDVI…MFLI), 249 to 269 (FITG…IIAP), 284 to 304 (LVPA…ILSL), and 322 to 342 (PLPI…YLVY).

Belongs to the binding-protein-dependent transport system permease family. FecCD subfamily.

Its subcellular location is the cell membrane. Probably part of a binding-protein-dependent transport system. Probably responsible for the translocation of the substrate across the membrane. In Methanocaldococcus jannaschii (strain ATCC 43067 / DSM 2661 / JAL-1 / JCM 10045 / NBRC 100440) (Methanococcus jannaschii), this protein is Putative ABC transporter permease protein MJ0876.